A 624-amino-acid polypeptide reads, in one-letter code: Probable potassium transport system protein Kup (624 aa).

The next 12 helical transmembrane spans lie at 16 to 36, 59 to 79, 106 to 126, 147 to 167, 174 to 194, 211 to 231, 252 to 272, 292 to 312, 342 to 362, 371 to 391, 394 to 414, and 418 to 438; these read ALLTLGALGVVFGDIGTSPLY, IISMVLWTITLIVTVKYVMLV, FVAVAGMLGAALFYGDVVITP, FILPVSLAVLIAIFAIQPLGT, FGPIMLLWFVTLAGLGIPQII, LIVAEPFQAFVLLGAVVLTVT, WFCVVMPALILTYLGQGALVI, IPLVILATIATVIASQAVISG, IYMPLVNGLLFVSVMVVVLVF, AYGLAVTGTLVLVSVLYLIYV, TWWKTALFIVLIGIPEVLLFA, and TKIHDGGWLPLLIAAVLIVVM.

Belongs to the HAK/KUP transporter (TC 2.A.72) family.

It is found in the cell membrane. It catalyses the reaction K(+)(in) + H(+)(in) = K(+)(out) + H(+)(out). In terms of biological role, transport of potassium into the cell. Likely operates as a K(+):H(+) symporter. This chain is Probable potassium transport system protein Kup, found in Corynebacterium glutamicum (strain ATCC 13032 / DSM 20300 / JCM 1318 / BCRC 11384 / CCUG 27702 / LMG 3730 / NBRC 12168 / NCIMB 10025 / NRRL B-2784 / 534).